The sequence spans 572 residues: Hemagglutinin-neuraminidase (572 aa).

At 1 to 31 the chain is on the intravirion side; it reads MEYWKHTNHGKDACNELGTSMATHGNKITNK. A helical membrane pass occupies residues 32–52; the sequence is ITYILWTIILVLLSIIFIIVL. At 53 to 572 the chain is on the virion surface side; the sequence is INSIKSEKAH…FKTEIPKSCS (520 aa). 2 cysteine pairs are disulfide-bonded: Cys190–Cys214 and Cys256–Cys269. The involved in neuraminidase activity stretch occupies residues 252-257; that stretch reads NRKSCS. Residues Asn308 and Asn351 are each glycosylated (N-linked (GlcNAc...) asparagine; by host). 2 disulfide bridges follow: Cys355–Cys469 and Cys463–Cys473. Asn523 carries an N-linked (GlcNAc...) asparagine; by host glycan. Cys535 and Cys544 are disulfide-bonded.

It belongs to the paramyxoviruses hemagglutinin-neuraminidase family. As to quaternary structure, homotetramer; composed of disulfide-linked homodimers. Interacts with F protein trimer.

The protein resides in the virion membrane. Its subcellular location is the host cell membrane. It carries out the reaction Hydrolysis of alpha-(2-&gt;3)-, alpha-(2-&gt;6)-, alpha-(2-&gt;8)- glycosidic linkages of terminal sialic acid residues in oligosaccharides, glycoproteins, glycolipids, colominic acid and synthetic substrates.. In terms of biological role, attaches the virus to sialic acid-containing cell receptors and thereby initiating infection. Binding of HN protein to the receptor induces a conformational change that allows the F protein to trigger virion/cell membranes fusion. Neuraminidase activity ensures the efficient spread of the virus by dissociating the mature virions from the neuraminic acid containing glycoproteins. This is Hemagglutinin-neuraminidase (HN) from Homo sapiens (Human).